A 146-amino-acid polypeptide reads, in one-letter code: uncharacterized protein (146 aa).

Positions 1–137 (MLSQEFFNSF…TINVMNQIHK (137 aa)) constitute an HTH marR-type domain.

This is an uncharacterized protein from Staphylococcus aureus (strain MW2).